The following is a 95-amino-acid chain: Protein TusB (95 aa).

The protein belongs to the DsrH/TusB family. As to quaternary structure, heterohexamer, formed by a dimer of trimers. The hexameric TusBCD complex contains 2 copies each of TusB, TusC and TusD. The TusBCD complex interacts with TusE.

It is found in the cytoplasm. Functionally, part of a sulfur-relay system required for 2-thiolation of 5-methylaminomethyl-2-thiouridine (mnm(5)s(2)U) at tRNA wobble positions. The protein is Protein TusB of Photorhabdus laumondii subsp. laumondii (strain DSM 15139 / CIP 105565 / TT01) (Photorhabdus luminescens subsp. laumondii).